A 126-amino-acid chain; its full sequence is Small ribosomal subunit protein uS12 (126 aa).

At Asp-89 the chain carries 3-methylthioaspartic acid.

The protein belongs to the universal ribosomal protein uS12 family. As to quaternary structure, part of the 30S ribosomal subunit. Contacts proteins S8 and S17. May interact with IF1 in the 30S initiation complex.

Functionally, with S4 and S5 plays an important role in translational accuracy. In terms of biological role, interacts with and stabilizes bases of the 16S rRNA that are involved in tRNA selection in the A site and with the mRNA backbone. Located at the interface of the 30S and 50S subunits, it traverses the body of the 30S subunit contacting proteins on the other side and probably holding the rRNA structure together. The combined cluster of proteins S8, S12 and S17 appears to hold together the shoulder and platform of the 30S subunit. The protein is Small ribosomal subunit protein uS12 of Carboxydothermus hydrogenoformans (strain ATCC BAA-161 / DSM 6008 / Z-2901).